Reading from the N-terminus, the 273-residue chain is LOB domain-containing protein 20 (273 aa).

Basic and acidic residues predominate over residues 1–15 (MADQQRGHNTSDSRR). A disordered region spans residues 1–39 (MADQQRGHNTSDSRRKSLAGKRTSQQTPTSSLSSGGVSM). Over residues 23–39 (TSQQTPTSSLSSGGVSM) the composition is skewed to low complexity. The 103-residue stretch at 50-152 (SPCGACKFLR…AELSVVQSQL (103 aa)) folds into the LOB domain. Positions 221–248 (LEHSLQPMPPHQQRRGDYQHEDEEESGA) are disordered.

Belongs to the LOB domain-containing protein family. Expressed in roots and flowers.

This is LOB domain-containing protein 20 (LBD20) from Arabidopsis thaliana (Mouse-ear cress).